We begin with the raw amino-acid sequence, 385 residues long: 8-amino-7-oxononanoate synthase (385 aa).

Residue Arg21 participates in substrate binding. Gly108 to Phe109 is a pyridoxal 5'-phosphate binding site. Residue His133 participates in substrate binding. Residues Ser179, His207, and Thr233 each contribute to the pyridoxal 5'-phosphate site. Lys236 carries the post-translational modification N6-(pyridoxal phosphate)lysine. Position 352 (Thr352) interacts with substrate.

Belongs to the class-II pyridoxal-phosphate-dependent aminotransferase family. BioF subfamily. In terms of assembly, homodimer. Pyridoxal 5'-phosphate is required as a cofactor.

It catalyses the reaction 6-carboxyhexanoyl-[ACP] + L-alanine + H(+) = (8S)-8-amino-7-oxononanoate + holo-[ACP] + CO2. Its pathway is cofactor biosynthesis; biotin biosynthesis. In terms of biological role, catalyzes the decarboxylative condensation of pimeloyl-[acyl-carrier protein] and L-alanine to produce 8-amino-7-oxononanoate (AON), [acyl-carrier protein], and carbon dioxide. The sequence is that of 8-amino-7-oxononanoate synthase from Klebsiella pneumoniae subsp. pneumoniae (strain ATCC 700721 / MGH 78578).